Reading from the N-terminus, the 24-residue chain is Conotoxin PIVF (24 aa).

3 disulfide bridges follow: C2-C10, C3-C15, and C13-C19. The residue at position 24 (K24) is a Lysine amide.

This sequence belongs to the conotoxin A superfamily. As to expression, expressed by the venom duct.

The protein localises to the secreted. Probable neurotoxin with ion channel inhibitor activity. In vivo, elicits dose-dependently excitatory activity upon injection into fish. Its action is slowly reversible. This is Conotoxin PIVF from Conus purpurascens (Purple cone).